Consider the following 408-residue polypeptide: Cobalt-precorrin-5B C(1)-methyltransferase (408 aa).

This sequence belongs to the CbiD family.

It catalyses the reaction Co-precorrin-5B + S-adenosyl-L-methionine = Co-precorrin-6A + S-adenosyl-L-homocysteine. It participates in cofactor biosynthesis; adenosylcobalamin biosynthesis; cob(II)yrinate a,c-diamide from sirohydrochlorin (anaerobic route): step 6/10. Its function is as follows. Catalyzes the methylation of C-1 in cobalt-precorrin-5B to form cobalt-precorrin-6A. The sequence is that of Cobalt-precorrin-5B C(1)-methyltransferase from Clostridioides difficile (strain 630) (Peptoclostridium difficile).